A 398-amino-acid chain; its full sequence is MYIRSLELRDFRSWPELKVELKPGITIFIGRNGFGKTNIVEAIGYLAHLSSHRVSTDAPLVRANAGDARISAVAVNQGRELAAHLLIKPHAANQGQINRTRVKSPRELLGVIKTVLFAPEDLALVRGEPAERRRYLDDIIATRRPRMAGVKADYDKVLKQRNALLKTATIALRRGYGTEEGAAALATLDTWDGQLARLGAEVMAARFALVQDLSSQIRDAYQTIAPESRPAAVNYKTTIDQGLAQFGEFDAGIIEATLLTELAAKRQREIERGMSLVGPHRDDLELHLGGQPAKGFASHGETWSFALSMRIAEFNLLRSDGTDPILILDDVFSELDAGRREKLVGIARDAEQVIITAAVSDDLPANLADAITARHTVTVRDTDAGRISLLDEQPDTQP.

An ATP-binding site is contributed by 30–37 (GRNGFGKT).

This sequence belongs to the RecF family.

The protein localises to the cytoplasm. In terms of biological role, the RecF protein is involved in DNA metabolism; it is required for DNA replication and normal SOS inducibility. RecF binds preferentially to single-stranded, linear DNA. It also seems to bind ATP. This Corynebacterium efficiens (strain DSM 44549 / YS-314 / AJ 12310 / JCM 11189 / NBRC 100395) protein is DNA replication and repair protein RecF.